The following is a 374-amino-acid chain: MSDNSQKKVIVGMSGGVDSSVSAYLLKQQGYQVEGLFMKNWEEDDDSEYCTAAEDLADAQAVCDKLGIHLHKINFASEYWDNVFEYFLAEYKAGRTPNPDILCNKEIKFKAFLEFADEVLDADYIAMGHYVRRSFPENGEKPQMLRGLDGNKDQSYFLYTLSHEQVARSLFPVGDLEKPEVRRIAEEQGLITAKKKDSTGICFIGERKFTDFLSRYLPAQPGNIESPEGEVLGQHQGLMYHTLGQRKGLHIGGRKGGGGNEEPWFVAEKDLKRNVLIAVQGQDHPMLKSEGLIASQLHWVEREPIRDVVKCTVKTRYRQQDIPCTIIPIDDENIKVIFDEPEIAVTPGQSAVFYQGDVCLGGGIIEKRIKYTQA.

Residues 12 to 19 (GMSGGVDS) and Met-38 each bind ATP. Residues 98–100 (NPD) form an interaction with target base in tRNA region. Residue Cys-103 is the Nucleophile of the active site. The cysteines at positions 103 and 202 are disulfide-linked. Residue Gly-128 coordinates ATP. Residues 152-154 (KDQ) form an interaction with tRNA region. Cys-202 acts as the Cysteine persulfide intermediate in catalysis. Positions 316–317 (RY) are interaction with tRNA.

This sequence belongs to the MnmA/TRMU family.

The protein localises to the cytoplasm. The enzyme catalyses S-sulfanyl-L-cysteinyl-[protein] + uridine(34) in tRNA + AH2 + ATP = 2-thiouridine(34) in tRNA + L-cysteinyl-[protein] + A + AMP + diphosphate + H(+). In terms of biological role, catalyzes the 2-thiolation of uridine at the wobble position (U34) of tRNA, leading to the formation of s(2)U34. This chain is tRNA-specific 2-thiouridylase MnmA, found in Vibrio vulnificus (strain CMCP6).